Here is an 83-residue protein sequence, read N- to C-terminus: Alpha-toxin CvIV4 (83 aa).

Residues 1-19 form the signal peptide; it reads MNYFILILVAALLILDVNC. Positions 21 to 79 constitute an LCN-type CS-alpha/beta domain; it reads KDGYPVEHSGCKYTCWKNEYCDKVCKDLKGEGGYCYINLTCWCTGLPDNVPLKTNQRCN. 4 disulfide bridges follow: cysteine 31–cysteine 78, cysteine 35–cysteine 55, cysteine 41–cysteine 61, and cysteine 45–cysteine 63.

This sequence belongs to the long (4 C-C) scorpion toxin superfamily. Sodium channel inhibitor family. In terms of tissue distribution, expressed by the venom gland.

It is found in the secreted. This toxin significantly slows the fast inactivation of Nav1.2/SCN2A (EC(50)=580 nM), Nav1.3/SCN3A (EC(50)=1310 nM), Nav1.4/SCN4A (EC(50)=530 nM), and Nav1.7/SCN9A (EC(50)=1340 nM). The toxin does not affect the peak amplitude of Nav1.7 currents. On all channels cited above, the toxin requires depolarizing potentials to slow channel inactivation. In addition, the toxin has no or very weak effects on the voltage-dependence of steady-state inactivation, and on voltage-dependence of activation. In vivo, it produces paw licking in mice equivalent to the effects of whole venom. The protein is Alpha-toxin CvIV4 of Centruroides vittatus (Striped bark scorpion).